The chain runs to 575 residues: MNTIFTIILTITILVLSLILKDLLFEGRIKKINKLIPGPSTIPVFGNLLQINAKDFPKSVNDFYERYGKVFRLRLGSVEIVVLTGPEVIDECFNKKHREIFKERYIKFSRFFGKDYNIISSNGDYHYVLRGILTSEITTRKLNNGRLESNKFILEMFSNLCKDNKETLVKNTPNQIRILAVKLILNFTLGIEENDETILIIVEKIKCIFEAAGLLIYSDYLPFLFPLDIKSMSKNDIISSYFFLKDFIGIKLDAIKIKYEKENELKNETTDETSSKLNNIPIIENYYKNYLDGSIHYDSILFSISDIIFAAVDSTSNGFSLLIGQLINKPEIQDKIYEEIMRNDENNNTNNISFADHTKYPYIISVMNESYRYNSSVPITEPNKTTEDVEVNGYKIAKGTMIIKNLRGTHLSKEFWGEDALEFKPERFKNQPLYQKGLFHFGAGPRGCPGGRFTESLTFTFLVIMLKNFKIVNPTDIPIDVEGEVGLAMQCKPFDALFIKHTNRNDFSKINKGLNQQCFTSSSQFPTCYQTEFFEFGFNGNFQLNDGIDCSSGVQQLSFFEKGFVFRVDHFLFEF.

A helical transmembrane segment spans residues I4–L24. C448 contacts heme.

Belongs to the cytochrome P450 family. Heme serves as cofactor.

Its subcellular location is the membrane. This Dictyostelium discoideum (Social amoeba) protein is Probable cytochrome P450 514A1 (cyp514A1).